Here is a 602-residue protein sequence, read N- to C-terminus: MSIFSLYTRVLELLGKEARLGWLLAFANLLLAASQFAEPVLFGRIVDVLSGKSVAGSSSAWPFLAAWVAFGLFTIACSALVALQADRLSHRQRQAVLTDYFEHILQLPLTFHSGTHSGRLMKVMLNGTDALWRLWLGFFREHFAAILSVVVLLPLSLYLNWRLAILLFVLCIVFTALTTFVVRRTFGMQMAVEEHYSELSARASDALGNVALVQSFVRVESEVQGLRSVANQLLEAQMPVLSWWALVTVITRASTTITVLAIFTLGIALHDQGLTSVGEIVMFVSFATLLIQKLEQVVSFINNVFMEAPRLREFFNVLDAVPAVHDRPDAIDAGRLSGLVEFNDVTFSYDGKRPAVEDLSFTALPGQTVALVGPTGAGKSTAIALLHRAFDPQSGFIRIDGMDVRGVTLTSLRRNIGVVFQEALLFNRSIAENLRVGKPDATEAEMRKAAERAQALEFIERSGGFETNAGERGRMLSGGERQRLSIARALLKDPPILILDEATSALDAVTEVKVNAALDEVMRGRTTFVIAHRLATIRNATRILVFENGRVTESGTFDELVAKGGHFAELARAQFMVQEQSRANTRASVTAAETIATAAKSP.

In terms of domain architecture, ABC transmembrane type-1 spans 21-306 (GWLLAFANLL…VVSFINNVFM (286 aa)). 6 helical membrane-spanning segments follow: residues 22 to 42 (WLLAFANLLLAASQFAEPVLF), 63 to 83 (FLAAWVAFGLFTIACSALVAL), 141 to 161 (EHFAAILSVVVLLPLSLYLNW), 163 to 183 (LAILLFVLCIVFTALTTFVVR), 240 to 262 (VLSWWALVTVITRASTTITVLAI), and 280 to 300 (IVMFVSFATLLIQKLEQVVSF). The ABC transporter domain maps to 340–573 (VEFNDVTFSY…GGHFAELARA (234 aa)). Residue 373 to 380 (GPTGAGKS) participates in ATP binding.

It belongs to the ABC transporter superfamily. Beta-(1--&gt;2)glucan exporter (TC 3.A.1.108.1) family. As to quaternary structure, homodimer.

It is found in the cell inner membrane. The enzyme catalyses [(1-&gt;2)-beta-D-glucosyl](n)(in) + ATP + H2O = [(1-&gt;2)-beta-D-glucosyl](n)(out) + ADP + phosphate + H(+). Its function is as follows. Involved in beta-(1--&gt;2)glucan export. Transmembrane domains (TMD) form a pore in the inner membrane and the ATP-binding domain (NBD) is responsible for energy generation. The sequence is that of Beta-(1--&gt;2)glucan export ATP-binding/permease protein NdvA from Bradyrhizobium diazoefficiens (strain JCM 10833 / BCRC 13528 / IAM 13628 / NBRC 14792 / USDA 110).